The chain runs to 343 residues: Probable transcription factor MYB58 (343 aa).

The interval 1-30 (MARAPGGVRRRSGRRGAGGGGAGGGGEALR) is disordered. The segment covering 15–27 (RGAGGGGAGGGGE) has biased composition (gly residues). HTH myb-type domains are found at residues 26–78 (GEAL…VNKL) and 79–134 (RPNL…KRLA). 2 DNA-binding regions (H-T-H motif) span residues 54 to 77 (WSSI…WVNK) and 107 to 130 (WARI…STRQ). 3 disordered regions span residues 137–169 (LRGP…TATF), 219–238 (PPAD…PPPL), and 307–343 (DDLP…DDVL). Positions 157–169 (PSSSSLDSQTATF) are enriched in polar residues. Residues 320 to 336 (QPPPPPPPPPPPSPSPS) show a composition bias toward pro residues.

The protein resides in the nucleus. In terms of biological role, probable transcription factor. The chain is Probable transcription factor MYB58 from Oryza sativa subsp. japonica (Rice).